The following is a 2662-amino-acid chain: Centrosome-associated protein CEP250L1 (2662 aa).

Coiled coils occupy residues Lys-1030–Glu-1248 and Ala-1281–Gln-1719.

Its subcellular location is the cytoplasm. The protein localises to the cytoskeleton. It is found in the microtubule organizing center. The protein resides in the centrosome. In terms of biological role, part of the centrosome inner core complex. Plays a role in the formation and/or stabilization of the mitotic spindle. Required for proper nuclear segregation and DNA partitioning during cell division. The sequence is that of Centrosome-associated protein CEP250L1 from Toxoplasma gondii (strain ATCC 50611 / Me49).